A 292-amino-acid chain; its full sequence is Elongation factor Ts (292 aa).

Residues Thr-82 to Val-85 form an involved in Mg(2+) ion dislocation from EF-Tu region.

Belongs to the EF-Ts family.

The protein resides in the cytoplasm. Associates with the EF-Tu.GDP complex and induces the exchange of GDP to GTP. It remains bound to the aminoacyl-tRNA.EF-Tu.GTP complex up to the GTP hydrolysis stage on the ribosome. This is Elongation factor Ts from Bordetella bronchiseptica (strain ATCC BAA-588 / NCTC 13252 / RB50) (Alcaligenes bronchisepticus).